We begin with the raw amino-acid sequence, 607 residues long: MGERNLDGTVSVKATINKYGQKATRSVIKSSVAEDLHKSGRELGIYRESRRVAESAKAKAEVELCKAKKIVKELTLRIEESNRRLKSRRIDIEAVMNESRIDGNGGYVRIMRELEDMKQELSKLKLDVVYVSREKVVAEKEVMELESRMEENLKLLESLKLEVDVANEEHVLVEVAKIEALKECKEVEEQREKERKEVSESLHKRKKRIREMIREIERSKNFENELAETLLDIEMLETQLKLVKEMERKVQRNESMSRSKNRAFERGKDNLSVLKEVTEATEAKKAELASINAELFCLVNTMDTLRKEFDHAKKETAWLDKMIQKDDVMLERLNTKLLIAKDQLEAVSKAEERISYLADNLTTSFEKLKSDREAAKKEELKLREEARIINNEIQKTETGFDGKEKELLSKLDELEKAKHAESLALEKLETMVEKTMETREMESRRNSTITISRFEYEYLSGKACHAEETAEKKVEAAMAWVEALKASTKAIMIKTESLKRVSGKTMLEEERESFRMQRSLSIKRLVQDEIQKFKGNSEDNGLINSPKPVRKSVRLSGKFAPVQGGKSRRYSSGNRATPTFFVIKKKKKVPNMVKFFSRKRRNSSLEQ.

Coiled coils occupy residues 66–295 (KAKK…NAEL) and 329–445 (MLER…ESRR).

The protein belongs to the WEB family. Interacts with WEB1. Ubiquitous but preferentially in chloroplast-containing tissues.

The protein localises to the cytoplasm. In terms of biological role, required for the chloroplast avoidance response under high intensity blue light. This avoidance response consists in the relocation of chloroplasts on the anticlinal side of exposed cells. Acts in association with WEB1 to maintain the velocity of chloroplast photorelocation movement via cp-actin filaments regulation. The chain is Protein PLASTID MOVEMENT IMPAIRED 2 (PMI2) from Arabidopsis thaliana (Mouse-ear cress).